The sequence spans 547 residues: CTP synthase (547 aa).

An amidoligase domain region spans residues 1 to 265; it reads MARYIFITGG…DQAVLDAFQI (265 aa). Serine 13 serves as a coordination point for CTP. Serine 13 provides a ligand contact to UTP. ATP contacts are provided by residues 14–19 and aspartate 71; that span reads SLGKGL. 2 residues coordinate Mg(2+): aspartate 71 and glutamate 139. CTP-binding positions include 146-148, 186-191, and lysine 222; these read DIE and KTKPTQ. Residues 186-191 and lysine 222 each bind UTP; that span reads KTKPTQ. Residues 291–546 enclose the Glutamine amidotransferase type-1 domain; sequence RIAVVGKYTQ…IRAAMDNERL (256 aa). Glycine 352 serves as a coordination point for L-glutamine. Cysteine 379 functions as the Nucleophile; for glutamine hydrolysis in the catalytic mechanism. L-glutamine is bound by residues 380-383, glutamate 403, and arginine 474; that span reads LGMQ. Residues histidine 519 and glutamate 521 contribute to the active site.

This sequence belongs to the CTP synthase family. In terms of assembly, homotetramer.

The catalysed reaction is UTP + L-glutamine + ATP + H2O = CTP + L-glutamate + ADP + phosphate + 2 H(+). It carries out the reaction L-glutamine + H2O = L-glutamate + NH4(+). It catalyses the reaction UTP + NH4(+) + ATP = CTP + ADP + phosphate + 2 H(+). It functions in the pathway pyrimidine metabolism; CTP biosynthesis via de novo pathway; CTP from UDP: step 2/2. Allosterically activated by GTP, when glutamine is the substrate; GTP has no effect on the reaction when ammonia is the substrate. The allosteric effector GTP functions by stabilizing the protein conformation that binds the tetrahedral intermediate(s) formed during glutamine hydrolysis. Inhibited by the product CTP, via allosteric rather than competitive inhibition. In terms of biological role, catalyzes the ATP-dependent amination of UTP to CTP with either L-glutamine or ammonia as the source of nitrogen. Regulates intracellular CTP levels through interactions with the four ribonucleotide triphosphates. The chain is CTP synthase from Paracoccus denitrificans (strain Pd 1222).